A 114-amino-acid chain; its full sequence is Iron-sulfur cluster insertion protein ErpA (114 aa).

Iron-sulfur cluster contacts are provided by Cys-42, Cys-106, and Cys-108.

It belongs to the HesB/IscA family. As to quaternary structure, homodimer. Requires iron-sulfur cluster as cofactor.

Required for insertion of 4Fe-4S clusters for at least IspG. This is Iron-sulfur cluster insertion protein ErpA from Proteus mirabilis (strain HI4320).